We begin with the raw amino-acid sequence, 271 residues long: Mannosyl-3-phosphoglycerate phosphatase (271 aa).

Asp-13 acts as the Nucleophile in catalysis. Residues Asp-13, Asp-15, and Asp-214 each coordinate Mg(2+).

The protein belongs to the HAD-like hydrolase superfamily. MPGP family. Requires Mg(2+) as cofactor.

The protein localises to the cytoplasm. It carries out the reaction 2-O-(alpha-D-mannosyl)-3-phosphoglycerate + H2O = (2R)-2-O-(alpha-D-mannosyl)-glycerate + phosphate. The protein is Mannosyl-3-phosphoglycerate phosphatase of Escherichia coli O17:K52:H18 (strain UMN026 / ExPEC).